Reading from the N-terminus, the 384-residue chain is S-adenosylmethionine synthase (384 aa).

Position 15 (His15) interacts with ATP. Position 17 (Asp17) interacts with Mg(2+). Glu43 contacts K(+). 2 residues coordinate L-methionine: Glu56 and Gln99. Positions 99–109 (QSPDINQGVDR) are flexible loop. Residues 164-166 (DAK), 231-232 (RF), Asp240, 246-247 (RK), Ala263, and Lys267 contribute to the ATP site. Asp240 lines the L-methionine pocket. Lys271 lines the L-methionine pocket.

Belongs to the AdoMet synthase family. In terms of assembly, homotetramer; dimer of dimers. The cofactor is Mg(2+). Requires K(+) as cofactor.

It localises to the cytoplasm. The enzyme catalyses L-methionine + ATP + H2O = S-adenosyl-L-methionine + phosphate + diphosphate. It participates in amino-acid biosynthesis; S-adenosyl-L-methionine biosynthesis; S-adenosyl-L-methionine from L-methionine: step 1/1. Catalyzes the formation of S-adenosylmethionine (AdoMet) from methionine and ATP. The overall synthetic reaction is composed of two sequential steps, AdoMet formation and the subsequent tripolyphosphate hydrolysis which occurs prior to release of AdoMet from the enzyme. In Shewanella pealeana (strain ATCC 700345 / ANG-SQ1), this protein is S-adenosylmethionine synthase.